Here is a 407-residue protein sequence, read N- to C-terminus: Phosphopentomutase (407 aa).

Residues Asp-10, Asp-306, His-311, Asp-347, His-348, and His-359 each contribute to the Mn(2+) site.

This sequence belongs to the phosphopentomutase family. The cofactor is Mn(2+).

The protein localises to the cytoplasm. It catalyses the reaction 2-deoxy-alpha-D-ribose 1-phosphate = 2-deoxy-D-ribose 5-phosphate. It carries out the reaction alpha-D-ribose 1-phosphate = D-ribose 5-phosphate. It participates in carbohydrate degradation; 2-deoxy-D-ribose 1-phosphate degradation; D-glyceraldehyde 3-phosphate and acetaldehyde from 2-deoxy-alpha-D-ribose 1-phosphate: step 1/2. In terms of biological role, isomerase that catalyzes the conversion of deoxy-ribose 1-phosphate (dRib-1-P) and ribose 1-phosphate (Rib-1-P) to deoxy-ribose 5-phosphate (dRib-5-P) and ribose 5-phosphate (Rib-5-P), respectively. The polypeptide is Phosphopentomutase (Cronobacter sakazakii (strain ATCC BAA-894) (Enterobacter sakazakii)).